The sequence spans 93 residues: U12-lycotoxin-Ls1c (93 aa).

The signal sequence occupies residues Met-1–Ser-18. Positions Glu-19 to Arg-38 are excised as a propeptide.

Belongs to the neurotoxin 31 family. Post-translationally, contains 5 disulfide bonds. Expressed by the venom gland.

It is found in the secreted. In Lycosa singoriensis (Wolf spider), this protein is U12-lycotoxin-Ls1c.